The chain runs to 231 residues: Vacuolar protein sorting-associated protein 24 (231 aa).

Residues 184–195 (KAADAATHREQS) show a composition bias toward basic and acidic residues. The segment at 184–214 (KAADAATHREQSLKQALPSLSNGIAKDSTEI) is disordered.

The protein belongs to the SNF7 family. Component of the endosomal sorting required for transport complex III (ESCRT-III).

It is found in the endosome membrane. The protein resides in the endomembrane system. Functionally, class E VPS protein implicated in concentration and sorting of cargo proteins of the multivesicular body (MVB) for incorporation into intralumenal vesicles. The lumenal sequestrated membrane proteins will be targeted into the vacuole after fusion of the endosome with the vacuole. This is Vacuolar protein sorting-associated protein 24 (vps24) from Schizosaccharomyces pombe (strain 972 / ATCC 24843) (Fission yeast).